The primary structure comprises 359 residues: Biotin synthase (359 aa).

Positions 1–22 (MQSTPLNFVPNAAKAPVTPGQA) are disordered. A Radical SAM core domain is found at 58–285 (NAVQLSTLLS…KAMVRLSAGR (228 aa)). Residues C73, C77, and C80 each contribute to the [4Fe-4S] cluster site. Residues C117, C148, C208, and R280 each contribute to the [2Fe-2S] cluster site.

The protein belongs to the radical SAM superfamily. Biotin synthase family. In terms of assembly, homodimer. The cofactor is [4Fe-4S] cluster. [2Fe-2S] cluster is required as a cofactor.

The enzyme catalyses (4R,5S)-dethiobiotin + (sulfur carrier)-SH + 2 reduced [2Fe-2S]-[ferredoxin] + 2 S-adenosyl-L-methionine = (sulfur carrier)-H + biotin + 2 5'-deoxyadenosine + 2 L-methionine + 2 oxidized [2Fe-2S]-[ferredoxin]. It participates in cofactor biosynthesis; biotin biosynthesis; biotin from 7,8-diaminononanoate: step 2/2. Catalyzes the conversion of dethiobiotin (DTB) to biotin by the insertion of a sulfur atom into dethiobiotin via a radical-based mechanism. This Ralstonia pickettii (strain 12J) protein is Biotin synthase.